Consider the following 160-residue polypeptide: MRCPYCQYEDTQVKDSRPVEEGAVIRRRRVCPVCGGRFTTFERVQLRELLVSKKSGRCEPFDRDKLMRSVEIAVRKRNIDPDYIERAISGIVRGLESLGEPEIASEKIGHLVMEALKSIDDIAYIRFASVYRDFRNASDFHDVIDELSKGIANTESCFDE.

A zinc finger spans residues 3–34 (CPYCQYEDTQVKDSRPVEEGAVIRRRRVCPVC). The ATP-cone domain maps to 49–139 (LLVSKKSGRC…VYRDFRNASD (91 aa)).

Belongs to the NrdR family. The cofactor is Zn(2+).

Functionally, negatively regulates transcription of bacterial ribonucleotide reductase nrd genes and operons by binding to NrdR-boxes. This Bartonella quintana (strain Toulouse) (Rochalimaea quintana) protein is Transcriptional repressor NrdR.